A 673-amino-acid chain; its full sequence is UvrABC system protein B (673 aa).

Residues 26–414 (EGLEDGLAHQ…GGDVVDQVVR (389 aa)) form the Helicase ATP-binding domain. 39–46 (GVTGSGKT) contributes to the ATP binding site. A Beta-hairpin motif is present at residues 92 to 115 (YYDYYQPEAYVPSSDTFIEKDASV). Positions 431–597 (QVDDLLSEIR…GLNKKVVDIL (167 aa)) constitute a Helicase C-terminal domain. The 36-residue stretch at 633 to 668 (LQKIHELEGLMMQHAQNLEFEEAAQIRDQLHQLREL) folds into the UVR domain.

It belongs to the UvrB family. Forms a heterotetramer with UvrA during the search for lesions. Interacts with UvrC in an incision complex.

The protein resides in the cytoplasm. Functionally, the UvrABC repair system catalyzes the recognition and processing of DNA lesions. A damage recognition complex composed of 2 UvrA and 2 UvrB subunits scans DNA for abnormalities. Upon binding of the UvrA(2)B(2) complex to a putative damaged site, the DNA wraps around one UvrB monomer. DNA wrap is dependent on ATP binding by UvrB and probably causes local melting of the DNA helix, facilitating insertion of UvrB beta-hairpin between the DNA strands. Then UvrB probes one DNA strand for the presence of a lesion. If a lesion is found the UvrA subunits dissociate and the UvrB-DNA preincision complex is formed. This complex is subsequently bound by UvrC and the second UvrB is released. If no lesion is found, the DNA wraps around the other UvrB subunit that will check the other stand for damage. The polypeptide is UvrABC system protein B (Shigella dysenteriae serotype 1 (strain Sd197)).